A 227-amino-acid chain; its full sequence is Lipoprotein-releasing system ATP-binding protein LolD (227 aa).

The 221-residue stretch at 7-227 (LSCRDLGKSY…HLQEGHLVAI (221 aa)) folds into the ABC transporter domain. 43-50 (GTSGSGKS) provides a ligand contact to ATP.

The protein belongs to the ABC transporter superfamily. Lipoprotein translocase (TC 3.A.1.125) family. The complex is composed of two ATP-binding proteins (LolD) and two transmembrane proteins (LolC and LolE).

It is found in the cell inner membrane. In terms of biological role, part of the ABC transporter complex LolCDE involved in the translocation of mature outer membrane-directed lipoproteins, from the inner membrane to the periplasmic chaperone, LolA. Responsible for the formation of the LolA-lipoprotein complex in an ATP-dependent manner. This Pseudomonas fluorescens (strain ATCC BAA-477 / NRRL B-23932 / Pf-5) protein is Lipoprotein-releasing system ATP-binding protein LolD.